Reading from the N-terminus, the 439-residue chain is uncharacterized protein (439 aa).

3 disordered regions span residues 1 to 36 (MRPGNAATAHDTGTQPRPGPTENWRSPAAVTRSKQA), 126 to 157 (SRTGAAVSDEYRPTGAALEQPGQEPGGTGVPI), and 411 to 439 (FRSDVPQPPPSPACRTTRAGSGAVAAVPR).

This is an uncharacterized protein from Streptomyces fradiae (Streptomyces roseoflavus).